An 808-amino-acid polypeptide reads, in one-letter code: Piwi-like protein 1 (808 aa).

The region spanning 214–333 (RINRVLNENN…IPGELCYLCG (120 aa)) is the PAZ domain. Residues 300-322 (SMVRPKEKTENEPEGPTETDQSL) form a disordered region. Residues 492–790 (HMALVFIPDD…LAELVGKIHR (299 aa)) enclose the Piwi domain.

The protein belongs to the argonaute family. Piwi subfamily. Expressed in dividing adult somatic stem cells (neoblasts).

This Schmidtea mediterranea (Freshwater planarian flatworm) protein is Piwi-like protein 1 (wi-1).